A 71-amino-acid chain; its full sequence is MKKTFYHYMMKHRAALFRNEISDLAEAMYDDLSFPKQSEDYDEISSYLELSGMLESMSIFDEAWDLYIQDR.

Belongs to the UPF0346 family.

The sequence is that of UPF0346 protein BCB4264_A2283 from Bacillus cereus (strain B4264).